The chain runs to 341 residues: N-acetyl-gamma-glutamyl-phosphate reductase (341 aa).

C147 is an active-site residue.

It belongs to the NAGSA dehydrogenase family. Type 1 subfamily.

It is found in the cytoplasm. The catalysed reaction is N-acetyl-L-glutamate 5-semialdehyde + phosphate + NADP(+) = N-acetyl-L-glutamyl 5-phosphate + NADPH + H(+). It participates in amino-acid biosynthesis; L-arginine biosynthesis; N(2)-acetyl-L-ornithine from L-glutamate: step 3/4. In terms of biological role, catalyzes the NADPH-dependent reduction of N-acetyl-5-glutamyl phosphate to yield N-acetyl-L-glutamate 5-semialdehyde. This is N-acetyl-gamma-glutamyl-phosphate reductase from Staphylococcus epidermidis (strain ATCC 35984 / DSM 28319 / BCRC 17069 / CCUG 31568 / BM 3577 / RP62A).